The primary structure comprises 480 residues: Probable efflux pump outer membrane protein SepC (480 aa).

A signal peptide spans 1-16 (MKTHYLSIALSVALSG). Cys17 carries N-palmitoyl cysteine lipidation. Cys17 carries the S-diacylglycerol cysteine lipid modification.

It belongs to the outer membrane factor (OMF) (TC 1.B.17) family.

Its subcellular location is the cell outer membrane. In terms of biological role, probable outer membrane component of the SepABC efflux pump with unknown specificity. In Pseudomonas putida (strain ATCC 700007 / DSM 6899 / JCM 31910 / BCRC 17059 / LMG 24140 / F1), this protein is Probable efflux pump outer membrane protein SepC (sepC).